We begin with the raw amino-acid sequence, 250 residues long: DNA repair protein RecO (250 aa).

Belongs to the RecO family.

Functionally, involved in DNA repair and RecF pathway recombination. This is DNA repair protein RecO from Rhodopseudomonas palustris (strain ATCC BAA-98 / CGA009).